The chain runs to 337 residues: tRNA N6-adenosine threonylcarbamoyltransferase (337 aa).

Fe cation-binding residues include His-111 and His-115. Residues 134-138 (LVSGG), Asp-167, Gly-180, and Asn-272 contribute to the substrate site. Fe cation is bound at residue Asp-300.

This sequence belongs to the KAE1 / TsaD family. Fe(2+) serves as cofactor.

The protein localises to the cytoplasm. It catalyses the reaction L-threonylcarbamoyladenylate + adenosine(37) in tRNA = N(6)-L-threonylcarbamoyladenosine(37) in tRNA + AMP + H(+). Its function is as follows. Required for the formation of a threonylcarbamoyl group on adenosine at position 37 (t(6)A37) in tRNAs that read codons beginning with adenine. Is involved in the transfer of the threonylcarbamoyl moiety of threonylcarbamoyl-AMP (TC-AMP) to the N6 group of A37, together with TsaE and TsaB. TsaD likely plays a direct catalytic role in this reaction. The sequence is that of tRNA N6-adenosine threonylcarbamoyltransferase from Shewanella amazonensis (strain ATCC BAA-1098 / SB2B).